The sequence spans 92 residues: Small ribosomal subunit protein uS17 (92 aa).

The protein belongs to the universal ribosomal protein uS17 family. Part of the 30S ribosomal subunit.

Functionally, one of the primary rRNA binding proteins, it binds specifically to the 5'-end of 16S ribosomal RNA. The sequence is that of Small ribosomal subunit protein uS17 from Corynebacterium diphtheriae (strain ATCC 700971 / NCTC 13129 / Biotype gravis).